A 312-amino-acid chain; its full sequence is Ribosomal RNA small subunit methyltransferase H (312 aa).

S-adenosyl-L-methionine is bound by residues Ala32–His34, Asp52, Phe79, Asp100, and Gln107.

Belongs to the methyltransferase superfamily. RsmH family.

Its subcellular location is the cytoplasm. The catalysed reaction is cytidine(1402) in 16S rRNA + S-adenosyl-L-methionine = N(4)-methylcytidine(1402) in 16S rRNA + S-adenosyl-L-homocysteine + H(+). Functionally, specifically methylates the N4 position of cytidine in position 1402 (C1402) of 16S rRNA. The chain is Ribosomal RNA small subunit methyltransferase H from Listeria monocytogenes serovar 1/2a (strain ATCC BAA-679 / EGD-e).